A 650-amino-acid chain; its full sequence is Phosphatidylinositol 4-kinase gamma 7 (650 aa).

The Ubiquitin-like; degenerate domain occupies 46–103; the sequence is RRVFVQTETGCVLGMELDRSDNVHTVKRRLQIALNFPTEESSLTYGDMVLTNDLSAVR. A PI3K/PI4K catalytic domain is found at 166–463; the sequence is GVEPLPVHSG…SVTERDVFSP (298 aa). Positions 172–178 are G-loop; sequence VHSGLGG. Residues 173-179, lysine 194, and 283-286 contribute to the ATP site; these read HSGLGGA and QKFV. Positions 316–324 are catalytic loop; it reads FNTDRHGGN. The interval 343 to 369 is activation loop; it reads PIDHGLCLPETLEDPYFEWIHWPQASL. Aspartate 345 is a binding site for ATP. 2 disordered regions span residues 508–534 and 560–595; these read SLGK…ENTV and STSM…KSAN. Residues 516-529 are compositionally biased toward acidic residues; sequence IKEEEEDEEEEEDK. Polar residues-rich tracts occupy residues 560–569 and 585–595; these read STSMKNTHLS and ENTSSGHKSAN. Serine 593 carries the phosphoserine modification.

It belongs to the PI3/PI4-kinase family. Type II PI4K subfamily.

The catalysed reaction is a 1,2-diacyl-sn-glycero-3-phospho-(1D-myo-inositol) + ATP = a 1,2-diacyl-sn-glycero-3-phospho-(1D-myo-inositol 4-phosphate) + ADP + H(+). In terms of biological role, the phosphorylation of phosphatidylinositol (PI) to PI4P is the first committed step in the generation of phosphatidylinositol 4,5-bisphosphate (PIP2), a precursor of the second messenger inositol 1,4,5-trisphosphate (InsP3). Undergoes autophosphorylation and phosphorylates serine/threonine residues of protein substrates. The polypeptide is Phosphatidylinositol 4-kinase gamma 7 (Arabidopsis thaliana (Mouse-ear cress)).